The following is a 313-amino-acid chain: C-type lectin domain-containing protein 162 (313 aa).

Residues 1–17 (MNIFTLLFIYFLSDTVA) form the signal peptide. N-linked (GlcNAc...) asparagine glycosylation is found at N28 and N41. In terms of domain architecture, C-type lectin spans 28–145 (NATGCFQFFR…DAMFLPFVCE (118 aa)). Cysteines 49 and 144 form a disulfide. The N-linked (GlcNAc...) asparagine glycan is linked to N213. The segment at 244–313 (VSQTETEMSR…RSKTIQISRG (70 aa)) is disordered. Residues 250–259 (EMSRSRKEKE) show a composition bias toward basic and acidic residues. N-linked (GlcNAc...) asparagine glycosylation is found at N279 and N300. The span at 291–304 (SKEKREREENETIR) shows a compositional bias: basic and acidic residues.

It is found in the secreted. This is C-type lectin domain-containing protein 162 (clec-162) from Caenorhabditis elegans.